Reading from the N-terminus, the 222-residue chain is MIVDILSLFPGYFKGPFDESILKRAQEKGLLTIRLTDIRDFADNRFHRVDDRPYGGGPGMVMMPQPVTMAIQHVKTPEAKVIYLSPQGRTLNAVKCRQLALEKHLILLCGHYEGIDQRVLDEEVDEEISIGDYVLTNGCLAAIVLLDAFSRFIPGVLGHPSAAAEDSFEGGLLDYPHYTRPEVFQGCSVPNVLLSGNHQEIAKWRHEQALKKTQEIRPDLLA.

S-adenosyl-L-methionine contacts are provided by residues Gly-110 and 130-135; that span reads IGDYVL.

Belongs to the RNA methyltransferase TrmD family. Homodimer.

It is found in the cytoplasm. It catalyses the reaction guanosine(37) in tRNA + S-adenosyl-L-methionine = N(1)-methylguanosine(37) in tRNA + S-adenosyl-L-homocysteine + H(+). Its function is as follows. Specifically methylates guanosine-37 in various tRNAs. In Protochlamydia amoebophila (strain UWE25), this protein is tRNA (guanine-N(1)-)-methyltransferase.